Here is a 156-residue protein sequence, read N- to C-terminus: MFLLYSIMNTYFLFGTTDWATLNFLVSVCLDNDYLYNKNSLFFTFFIFFLAAVFKLGLPPFFFFKIEVYKGLPLFVTFFYSVFFFFNYLSGFFFLFFVFFTSFFVYFSYLLFFFVPVFVLFFFFYLTTYDNLNCFFSISSVINSTFLVYLLASSFF.

Its subcellular location is the mitochondrion. This is an uncharacterized protein from Paramecium tetraurelia.